Consider the following 233-residue polypeptide: Glutathione S-transferase U15 (233 aa).

In terms of domain architecture, GST N-terminal spans 5 to 85 (EEVKLLGTWY…YIDETWNSSG (81 aa)). Residues 15–16 (SP), 42–43 (SK), 56–57 (KV), and 69–70 (VS) contribute to the glutathione site. The GST C-terminal domain maps to 92-219 (HPYDRALARF…VPDIDKVAKF (128 aa)). Thr-158 is subject to Phosphothreonine.

It belongs to the GST superfamily. Tau family.

Its subcellular location is the cytoplasm. The protein resides in the cytosol. It catalyses the reaction RX + glutathione = an S-substituted glutathione + a halide anion + H(+). May be involved in the conjugation of reduced glutathione to a wide number of exogenous and endogenous hydrophobic electrophiles and have a detoxification role against certain herbicides. The chain is Glutathione S-transferase U15 (GSTU15) from Arabidopsis thaliana (Mouse-ear cress).